We begin with the raw amino-acid sequence, 103 residues long: Large ribosomal subunit protein bL21 (103 aa).

Belongs to the bacterial ribosomal protein bL21 family. Part of the 50S ribosomal subunit. Contacts protein L20.

This protein binds to 23S rRNA in the presence of protein L20. The polypeptide is Large ribosomal subunit protein bL21 (Azotobacter vinelandii (strain DJ / ATCC BAA-1303)).